A 435-amino-acid chain; its full sequence is Ribulose bisphosphate carboxylase/oxygenase activase 2, chloroplastic (435 aa).

The transit peptide at 1-56 (MAAAYSTVGAVNRAPLSLNGSGARASLVPSTAFFGSSLKKSAAKFPKASSGNFKIV) directs the protein to the chloroplast. Residue 165–172 (GGKGQGKS) coordinates ATP.

The protein belongs to the RuBisCO activase family.

It is found in the plastid. The protein resides in the chloroplast stroma. In terms of biological role, activation of RuBisCO (ribulose-1,5-bisphosphate carboxylase/oxygenase; EC 4.1.1.39) involves the ATP-dependent carboxylation of the epsilon-amino group of lysine leading to a carbamate structure. The sequence is that of Ribulose bisphosphate carboxylase/oxygenase activase 2, chloroplastic (RCA2) from Larrea tridentata (Creosote bush).